A 535-amino-acid polypeptide reads, in one-letter code: Thermosome subunit gamma (535 aa).

The protein belongs to the TCP-1 chaperonin family. In terms of assembly, forms a heterooligomeric complex of two stacked nine-membered rings; one of alpha and the other of beta subunits.

It localises to the cytoplasm. The enzyme catalyses ATP + H2O = ADP + phosphate + H(+). Its function is as follows. Molecular chaperone; binds unfolded polypeptides in vitro, and has a weak ATPase activity. The polypeptide is Thermosome subunit gamma (thsC) (Saccharolobus shibatae (strain ATCC 51178 / DSM 5389 / JCM 8931 / NBRC 15437 / B12) (Sulfolobus shibatae)).